A 198-amino-acid polypeptide reads, in one-letter code: Imidazoleglycerol-phosphate dehydratase (198 aa).

It belongs to the imidazoleglycerol-phosphate dehydratase family.

The protein resides in the cytoplasm. It catalyses the reaction D-erythro-1-(imidazol-4-yl)glycerol 3-phosphate = 3-(imidazol-4-yl)-2-oxopropyl phosphate + H2O. The protein operates within amino-acid biosynthesis; L-histidine biosynthesis; L-histidine from 5-phospho-alpha-D-ribose 1-diphosphate: step 6/9. The protein is Imidazoleglycerol-phosphate dehydratase of Methylobacillus flagellatus (strain ATCC 51484 / DSM 6875 / VKM B-1610 / KT).